The following is a 421-amino-acid chain: Putative bifunctional polynucleotide phosphatase/kinase (421 aa).

A phosphatase region spans residues 25-231; sequence DSYLKGIINN…SENLKTNYKL (207 aa). Residues 235–415 are kinase; sequence NPTEIIDEIE…DDPKWKRSFM (181 aa). 265 to 272 provides a ligand contact to ATP; that stretch reads GQPGSGKS.

It in the N-terminal section; belongs to the DNA 3' phosphatase family.

The enzyme catalyses a 3'end (2'-deoxyribonucleotide 3'-phosphate)-DNA + H2O = a 3'-end 2'-deoxyribonucleotide-DNA + phosphate. It catalyses the reaction a 5'-end dephospho-2'-deoxyribonucleoside-DNA + ATP = a 5'-end 5'-phospho-2'-deoxyribonucleoside-DNA + ADP + H(+). This chain is Putative bifunctional polynucleotide phosphatase/kinase, found in Acanthamoeba polyphaga mimivirus (APMV).